Reading from the N-terminus, the 226-residue chain is Enolase-phosphatase E1 (226 aa).

Residues Asp-9 and Glu-11 each contribute to the Mg(2+) site. Residues 115 to 116 (SS) and Lys-160 each bind substrate. Asp-185 contacts Mg(2+).

The protein belongs to the HAD-like hydrolase superfamily. MasA/MtnC family. Monomer. The cofactor is Mg(2+).

Its subcellular location is the cytoplasm. It is found in the nucleus. It carries out the reaction 5-methylsulfanyl-2,3-dioxopentyl phosphate + H2O = 1,2-dihydroxy-5-(methylsulfanyl)pent-1-en-3-one + phosphate. It participates in amino-acid biosynthesis; L-methionine biosynthesis via salvage pathway; L-methionine from S-methyl-5-thio-alpha-D-ribose 1-phosphate: step 3/6. It functions in the pathway amino-acid biosynthesis; L-methionine biosynthesis via salvage pathway; L-methionine from S-methyl-5-thio-alpha-D-ribose 1-phosphate: step 4/6. Its function is as follows. Bifunctional enzyme that catalyzes the enolization of 2,3-diketo-5-methylthiopentyl-1-phosphate (DK-MTP-1-P) into the intermediate 2-hydroxy-3-keto-5-methylthiopentenyl-1-phosphate (HK-MTPenyl-1-P), which is then dephosphorylated to form the acireductone 1,2-dihydroxy-3-keto-5-methylthiopentene (DHK-MTPene). The protein is Enolase-phosphatase E1 of Zygosaccharomyces rouxii (strain ATCC 2623 / CBS 732 / NBRC 1130 / NCYC 568 / NRRL Y-229).